The sequence spans 647 residues: Glutamyl-tRNA(Gln) amidotransferase subunit B, mitochondrial (647 aa).

Residues Met1–Leu16 constitute a mitochondrion transit peptide. The tract at residues Pro39–Arg77 is disordered. Low complexity predominate over residues Asn58 to Ser76.

It belongs to the GatB/GatE family. GatB subfamily. Subunit of the heterotrimeric GatCAB amidotransferase (AdT) complex, composed of A, B and C subunits.

It localises to the mitochondrion. The catalysed reaction is L-glutamyl-tRNA(Gln) + L-glutamine + ATP + H2O = L-glutaminyl-tRNA(Gln) + L-glutamate + ADP + phosphate + H(+). Functionally, allows the formation of correctly charged Gln-tRNA(Gln) through the transamidation of misacylated Glu-tRNA(Gln) in the mitochondria. The reaction takes place in the presence of glutamine and ATP through an activated gamma-phospho-Glu-tRNA(Gln). This Mycosarcoma maydis (Corn smut fungus) protein is Glutamyl-tRNA(Gln) amidotransferase subunit B, mitochondrial.